We begin with the raw amino-acid sequence, 699 residues long: Elongation factor G (699 aa).

The tr-type G domain occupies 10-292 (NRTRNIGIMA…AVIDYLPSPT (283 aa)). GTP-binding positions include 19–26 (AHIDAGKT), 90–94 (DTPGH), and 144–147 (NKMD). The disordered stretch occupies residues 292–312 (TDVPAIRGEEDDGSEGSRSAS).

The protein belongs to the TRAFAC class translation factor GTPase superfamily. Classic translation factor GTPase family. EF-G/EF-2 subfamily.

Its subcellular location is the cytoplasm. Catalyzes the GTP-dependent ribosomal translocation step during translation elongation. During this step, the ribosome changes from the pre-translocational (PRE) to the post-translocational (POST) state as the newly formed A-site-bound peptidyl-tRNA and P-site-bound deacylated tRNA move to the P and E sites, respectively. Catalyzes the coordinated movement of the two tRNA molecules, the mRNA and conformational changes in the ribosome. In Coxiella burnetii (strain RSA 331 / Henzerling II), this protein is Elongation factor G.